The following is a 482-amino-acid chain: DNA polymerase II small subunit (482 aa).

Belongs to the DNA polymerase delta/II small subunit family. Heterodimer of a large subunit and a small subunit.

The catalysed reaction is DNA(n) + a 2'-deoxyribonucleoside 5'-triphosphate = DNA(n+1) + diphosphate. It catalyses the reaction Exonucleolytic cleavage in the 3'- to 5'-direction to yield nucleoside 5'-phosphates.. In terms of biological role, possesses two activities: a DNA synthesis (polymerase) and an exonucleolytic activity that degrades single-stranded DNA in the 3' to 5' direction. Has a template-primer preference which is characteristic of a replicative DNA polymerase. The chain is DNA polymerase II small subunit (polB) from Methanothermobacter thermautotrophicus (strain ATCC 29096 / DSM 1053 / JCM 10044 / NBRC 100330 / Delta H) (Methanobacterium thermoautotrophicum).